We begin with the raw amino-acid sequence, 196 residues long: ATP-dependent Clp protease proteolytic subunit (196 aa).

Residue Ser101 is the Nucleophile of the active site. His126 is an active-site residue.

Belongs to the peptidase S14 family. As to quaternary structure, component of the chloroplastic Clp protease core complex.

The protein resides in the plastid. It localises to the chloroplast stroma. It carries out the reaction Hydrolysis of proteins to small peptides in the presence of ATP and magnesium. alpha-casein is the usual test substrate. In the absence of ATP, only oligopeptides shorter than five residues are hydrolyzed (such as succinyl-Leu-Tyr-|-NHMec, and Leu-Tyr-Leu-|-Tyr-Trp, in which cleavage of the -Tyr-|-Leu- and -Tyr-|-Trp bonds also occurs).. Functionally, cleaves peptides in various proteins in a process that requires ATP hydrolysis. Has a chymotrypsin-like activity. Plays a major role in the degradation of misfolded proteins. The sequence is that of ATP-dependent Clp protease proteolytic subunit from Barbarea verna (Land cress).